A 396-amino-acid chain; its full sequence is Potassium channel subfamily K member 9 (396 aa).

Residues 1–8 are Cytoplasmic-facing; sequence MKRQNVRT. Residues 9-29 traverse the membrane as a helical segment; sequence LSLIACTFTYLLVGAAVFDAL. The Extracellular portion of the chain corresponds to 30–88; sequence ESDHEMREEEKLKAEEVRLRGKYNISSDDYQQLELVILQSEPHRAGVQWKFAGSFYFAI. Asparagine 53 is a glycosylation site (N-linked (GlcNAc...) asparagine). The pore-forming intramembrane region spans 89 to 101; it reads TVITTIGYGHAAP. K(+) is bound by residues threonine 93, isoleucine 94, glycine 95, and tyrosine 96. Positions 93–98 are selectivity filter 1; the sequence is TIGYGH. Residues 102 to 107 are Extracellular-facing; sequence GTDAGK. The chain crosses the membrane as a helical span at residues 108–128; sequence AFCMFYAVLGIPLTLVMFQSL. Over 129–158 the chain is Cytoplasmic; it reads GERMNTFVRYLLKRIKKCCGMRNTEVSMEN. Residues 159 to 179 traverse the membrane as a helical segment; the sequence is MVTVGFFSCMGTLCLGAAAFS. Residues 180–194 are Extracellular-facing; it reads QCEDWSFFHAYYYCF. Positions 195 to 207 form an intramembrane region, pore-forming; that stretch reads ITLTTIGFGDFVA. K(+) contacts are provided by threonine 199, isoleucine 200, glycine 201, and phenylalanine 202. The segment at 199 to 204 is selectivity filter 2; that stretch reads TIGFGD. At 208 to 218 the chain is on the extracellular side; that stretch reads LQSKGALQRKP. Residues 219-239 form a helical membrane-spanning segment; sequence FYVAFSFMYILVGLTVIGAFL. The Cytoplasmic portion of the chain corresponds to 240–396; the sequence is NLVVLRFLTM…HRLHIRRKSI (157 aa). The X-gate stretch occupies residues 243-248; sequence VLRFLT.

The protein belongs to the two pore domain potassium channel (TC 1.A.1.8) family. Homodimer. Heterodimer with KCNK1. Heterodimer with KCNK3. In terms of tissue distribution, highly expressed in the CNS and at lower levels in the colon, kidney, liver, lung, spleen, stomach and skeletal muscle. The highest expression was found in the olfactory nuclei, piriform cortex, cerebellum, antedorsal thalmic nucleus, pontine nucleus, dorsal raphe and several nuclei in the medulla. Shows a non-homogeneous distribution in the hippocampus. Expressed at highest levels in the lateral posterior and inferior portions and at medium levels in neocortex. Expressed in motoneurons, including hypoglossal motoneurons (at protein level).

Its subcellular location is the cell membrane. It localises to the mitochondrion inner membrane. It is found in the cell projection. The protein localises to the dendrite. The enzyme catalyses K(+)(in) = K(+)(out). The catalysed reaction is Na(+)(in) = Na(+)(out). With respect to regulation, activated by halothane and isoflurane. Inhibited by external acidification, diacylglycerol, anandamide and AGT/angiotensin II. Ruthenium red inhibits homomeric but not KCNK3:KCNK9 heteromeric channels. K(+) channel that conducts voltage-dependent outward rectifying currents upon membrane depolarization. Voltage sensing is coupled to K(+) electrochemical gradient in an 'ion flux gating' mode where outward but not inward ion flow opens the gate. Changes ion selectivity and becomes permeable to Na(+) ions in response to extracellular acidification. Protonation of the pH sensor His-98 stabilizes C-type inactivation conformation likely converting the channel from outward K(+)-conducting, to inward Na(+)-conducting to nonconductive state. Homo- and heterodimerizes to form functional channels with distinct regulatory and gating properties. Allows K(+) currents with fast-gating kinetics important for the repolarization and hyperpolarization phases of action potentials. In granule neurons, hyperpolarizes the resting membrane potential to limit intrinsic neuronal excitability, but once the action potential threshold is reached, supports high-frequency action potential firing and increased neuronal excitability. Homomeric and/or heteromeric KCNK3:KCNK9 channels operate in cerebellar granule cells, whereas heteromeric KCNK1:KCNK9 enables currents in hippocampal dentate gyrus granule neurons. Dispensable for central chemosensory respiration i.e. breathing controlled by brainstem CO2/pH, it rather conducts pH-sensitive currents and controls the firing rate of serotonergic raphe neurons involved in potentiation of the respiratory chemoreflex. In retinal ganglion cells, mediates outward rectifying currents that regulate action potentials in response to acidification of the synaptic cleft. Involved in transmission of image-forming and nonimage-forming visual information in the retina. In adrenal gland, contributes to the maintenance of a hyperpolarized resting membrane potential of aldosterone-producing cells at zona glomerulosa and limits aldosterone release as part of a regulatory mechanism that controls arterial blood pressure and electrolyte homeostasis. The protein is Potassium channel subfamily K member 9 of Rattus norvegicus (Rat).